The chain runs to 385 residues: MKYELDKTDGNARRGRLVFERPQGTFTVETPAFMPVGTYGTVKGMTPEEVRATGAEILLGNTFHLWLRPGQEVMRKHGDLHDFMQWHRPILTDSGGFQVFSLGKLRKITEEGVKFQNPINGERIFLSPEKSMEIQYDLGSDIVMIFDECTPYPATFDYAKKSMEMSLRWAKRSRDRFDELGNKNALFGIIQGGVYEELRKVSVEGLVNIGFDGYAVGGLAVGEPKEDMHRILEYVCPQIPADKPRYLMGVGKPEDLVEGVRRGIDMFDCVMPTRNARNGHLFVSDGIVKIRNAKYREDTSPLDPECDCYTCKHYTKAYLYHLDKCGEILGARLNTIHNLRYYQRLMAQIRQAIEEDRFEAFVQEFYAKMGKPVPPMQSEIKSDEG.

Aspartate 93 functions as the Proton acceptor in the catalytic mechanism. Residues 93-97 (DSGGF), aspartate 147, glutamine 191, and glycine 218 contribute to the substrate site. Residues 249 to 255 (GVGKPED) are RNA binding. Residue aspartate 268 is the Nucleophile of the active site. Residues 273–277 (TRNAR) are RNA binding; important for wobble base 34 recognition. The Zn(2+) site is built by cysteine 306, cysteine 308, cysteine 311, and histidine 337.

It belongs to the queuine tRNA-ribosyltransferase family. In terms of assembly, homodimer. Within each dimer, one monomer is responsible for RNA recognition and catalysis, while the other monomer binds to the replacement base PreQ1. The cofactor is Zn(2+).

It catalyses the reaction 7-aminomethyl-7-carbaguanine + guanosine(34) in tRNA = 7-aminomethyl-7-carbaguanosine(34) in tRNA + guanine. It functions in the pathway tRNA modification; tRNA-queuosine biosynthesis. Its function is as follows. Catalyzes the base-exchange of a guanine (G) residue with the queuine precursor 7-aminomethyl-7-deazaguanine (PreQ1) at position 34 (anticodon wobble position) in tRNAs with GU(N) anticodons (tRNA-Asp, -Asn, -His and -Tyr). Catalysis occurs through a double-displacement mechanism. The nucleophile active site attacks the C1' of nucleotide 34 to detach the guanine base from the RNA, forming a covalent enzyme-RNA intermediate. The proton acceptor active site deprotonates the incoming PreQ1, allowing a nucleophilic attack on the C1' of the ribose to form the product. After dissociation, two additional enzymatic reactions on the tRNA convert PreQ1 to queuine (Q), resulting in the hypermodified nucleoside queuosine (7-(((4,5-cis-dihydroxy-2-cyclopenten-1-yl)amino)methyl)-7-deazaguanosine). In Pasteurella multocida (strain Pm70), this protein is Queuine tRNA-ribosyltransferase.